The chain runs to 146 residues: Putative ankyrin repeat protein FPV224 (146 aa).

4 ANK repeats span residues 9–38, 42–79, 94–126, and 127–145; these read SLST…DASI, KGIT…TRDI, YVFV…RIDE, and YYYS…KAVN.

This Fowlpox virus (strain NVSL) (FPV) protein is Putative ankyrin repeat protein FPV224.